We begin with the raw amino-acid sequence, 1978 residues long: MAARVLAPPGPDSFKPFTPESLANIERRIAESKLKKPPKADGSHREDDEDSKPKPNSDLEAGKSLPFIYGDIPQGLVAVPLEDFDPYYLTQKTFVVLNRGKTLFRFSATPALYILSPFNLIRRIAIKILIHSVFSMIIMCTILTNCVFMTFSNPPEWSKNVEYTFTGIYTFESLVKIIARGFCIDGFTFLRDPWNWLDFSVIMMAYVTEFVDLGNVSALRTFRVLRALKTISVIPGLKTIVGALIQSVKKLSDVMILTVFCLSVFALIGLQLFMGNLRNKCVVWPINFNESYLENGTRGFDWEEYINNKTNFYMVPGMLEPLLCGNSSDAGQCPEGFQCMKAGRNPNYGYTSFDTFSWAFLALFRLMTQDYWENLYQLTLRAAGKTYMIFFVLVIFVGSFYLVNLILAVVAMAYEEQNQATLEEAEQKEAEFKAMLEQLKKQQEEAQAAAMATSAGTVSEDAIEEEGEDGVGSPRSSSELSKLSSKSAKERRNRRKKRKQKELSEGEEKGDPEKVFKSESEDGMRRKAFRLPDNRIGRKFSIMNQSLLSIPGSPFLSRHNSKSSIFSFRGPGRFRDPGSENEFADDEHSTVEESEGRRDSLFIPIRARERRSSYSGYSGYSQCSRSSRIFPSLRRSVKRNSTVDCNGVVSLIGPGSHIGRLLPEATTEVEIKKKGPGSLLVSMEQLASYGRKDRINSIMSVVTNTLVEELEESQRKCPPCWYKFANTFLIWECHPYWIKLKEIVNLIVMDPFVDLAITICIVLNTLFMAMEHHPMTPQFEHVLAVGNLVFTGIFTAEMFLKLIAMDPYYYFQEGWNIFDGFIVSLSLMELGLADVEGLSVLRSFRLLRVFKLAKSWPTLNMLIKIIGNSVGALGNLTLVLAIIVFIFAVVGMQLFGKSYKECVCKISQECKLPRWHMNDFFHSFLIVFRVLCGEWIETMWDCMEVAGQAMCLIVFMMVMVIGNLVVLNLFLALLLSSFSADNLAATDDDGEMNNLQISVIRIKKGVAWAKVKVHAFMQAHFKQREADEVKPLDELYEKKANCIANHTGVDIHRNGDFQKNGNGTTSGIGSSVEKYIIDEDHMSFINNPNLTVRVPIAVGESDFENLNTEDVSSESDPEGSKDKLDDTSSSEGSTIDIKPEVEEVPVEQPEEYLDPDACFTEGCVQRFKCCQVNIEEGLGKSWWILRKTCFLIVEHNWFETFIIFMILLSSGALAFEDIYIEQRKTIRTILEYADKVFTYIFILEMLLKWTAYGFVKFFTNAWCWLDFLIVAVSLVSLIANALGYSELGAIKSLRTLRALRPLRALSRFEGMRVVVNALVGAIPSIMNVLLVCLIFWLIFSIMGVNLFAGKYHYCFNETSEIRFEIDEVNNKTDCEKLMEGNNTEIRWKNVKINFDNVGAGYLALLQVATFKGWMDIMYAAVDSRKPDEQPDYEGNIYMYIYFVIFIIFGSFFTLNLFIGVIIDNFNQQKKKFGGQDIFMTEEQKKYYNAMKKLGSKKPQKPIPRPLNKIQGIVFDFVTQQAFDIVIMMLICLNMVTMMVETDTQSKQMENILYWINLVFVIFFTCECVLKMFALRHYYFTIGWNIFDFVVVILSIVGMFLADIIEKYFVSPTLFRVIRLARIGRILRLIKGAKGIRTLLFALMMSLPALFNIGLLLFLVMFIFSIFGMSNFAYVKHEAGIDDMFNFETFGNSMICLFQITTSAGWDGLLLPILNRPPDCSLDKEHPGSGFKGDCGNPSVGIFFFVSYIIISFLIVVNMYIAIILENFSVATEESADPLSEDDFETFYEIWEKFDPDATQFIEYCKLADFADALEHPLRVPKPNTIELIAMDLPMVSGDRIHCLDILFAFTKRVLGDSGELDILRQQMEERFVASNPSKVSYEPITTTLRRKQEEVSAVVLQRAYRGHLARRGFICRKITSNKLENGGTHREKKESTPSTASLPSYDSVTKPDKEKQQRAEEGRRERAKRQKEVRESKC.

2 disordered regions span residues 1–20 (MAARVLAPPGPDSFKPFTPE) and 28–62 (RIAESKLKKPPKADGSHREDDEDSKPKPNSDLEAG). Residues 1–132 (MAARVLAPPG…RIAIKILIHS (132 aa)) lie on the Cytoplasmic side of the membrane. Residues 28-61 (RIAESKLKKPPKADGSHREDDEDSKPKPNSDLEA) show a composition bias toward basic and acidic residues. The stretch at 114–442 (ILSPFNLIRR…KAMLEQLKKQ (329 aa)) is one I repeat. The chain crosses the membrane as a helical span at residues 133 to 151 (VFSMIIMCTILTNCVFMTF). The Extracellular portion of the chain corresponds to 152–158 (SNPPEWS). The chain crosses the membrane as a helical span at residues 159-179 (KNVEYTFTGIYTFESLVKIIA). The Cytoplasmic segment spans residues 180–193 (RGFCIDGFTFLRDP). A helical transmembrane segment spans residues 194–211 (WNWLDFSVIMMAYVTEFV). Over 212 to 217 (DLGNVS) the chain is Extracellular. N-linked (GlcNAc...) asparagine glycosylation occurs at Asn215. The helical transmembrane segment at 218-234 (ALRTFRVLRALKTISVI) threads the bilayer. The Cytoplasmic segment spans residues 235–253 (PGLKTIVGALIQSVKKLSD). Residues 254 to 273 (VMILTVFCLSVFALIGLQLF) traverse the membrane as a helical segment. Residues 274 to 355 (MGNLRNKCVV…PNYGYTSFDT (82 aa)) are Extracellular-facing. A disulfide bridge connects residues Cys281 and Cys333. N-linked (GlcNAc...) asparagine glycans are attached at residues Asn289, Asn295, Asn308, and Asn326. Residues 356-380 (FSWAFLALFRLMTQDYWENLYQLTL) constitute an intramembrane region (pore-forming). Na(+) is bound at residue Glu373. The Extracellular portion of the chain corresponds to 381–387 (RAAGKTY). Residues 388–408 (MIFFVLVIFVGSFYLVNLILA) traverse the membrane as a helical segment. Residues 409-751 (VVAMAYEEQN…EIVNLIVMDP (343 aa)) are Cytoplasmic-facing. Disordered stretches follow at residues 446-530 (AQAA…KAFR) and 576-597 (DPGSENEFADDEHSTVEESEGR). The segment covering 473 to 486 (SPRSSSELSKLSSK) has biased composition (low complexity). A compositionally biased stretch (basic residues) spans 489–500 (KERRNRRKKRKQ). Composition is skewed to basic and acidic residues over residues 501–530 (KELSEGEEKGDPEKVFKSESEDGMRRKAFR) and 586–597 (DEHSTVEESEGR). Residues Ser518 and Ser520 each carry the phosphoserine modification. The stretch at 733–1005 (CHPYWIKLKE…QISVIRIKKG (273 aa)) is one II repeat. Residues 752–770 (FVDLAITICIVLNTLFMAM) form a helical membrane-spanning segment. The Extracellular portion of the chain corresponds to 771 to 781 (EHHPMTPQFEH). A helical transmembrane segment spans residues 782-801 (VLAVGNLVFTGIFTAEMFLK). Over 802–815 (LIAMDPYYYFQEGW) the chain is Cytoplasmic. Residues 816 to 835 (NIFDGFIVSLSLMELGLADV) form a helical membrane-spanning segment. The Extracellular segment spans residues 836–837 (EG). The chain crosses the membrane as a helical span at residues 838 to 855 (LSVLRSFRLLRVFKLAKS). The Cytoplasmic portion of the chain corresponds to 856 to 871 (WPTLNMLIKIIGNSVG). The helical transmembrane segment at 872 to 890 (ALGNLTLVLAIIVFIFAVV) threads the bilayer. Topologically, residues 891-919 (GMQLFGKSYKECVCKISQECKLPRWHMND) are extracellular. Residues Cys904 and Cys910 are joined by a disulfide bond. An intramembrane region (pore-forming) is located at residues 920 to 940 (FFHSFLIVFRVLCGEWIETMW). Positions 934 and 937 each coordinate Na(+). The Extracellular portion of the chain corresponds to 941 to 953 (DCMEVAGQAMCLI). Cys942 and Cys951 are disulfide-bonded. The helical transmembrane segment at 954-974 (VFMMVMVIGNLVVLNLFLALL) threads the bilayer. Residues 975–1197 (LSSFSADNLA…TCFLIVEHNW (223 aa)) lie on the Cytoplasmic side of the membrane. Positions 1105-1146 (NLNTEDVSSESDPEGSKDKLDDTSSSEGSTIDIKPEVEEVPV) are disordered. One copy of the III repeat lies at 1178–1493 (LGKSWWILRK…KKYYNAMKKL (316 aa)). A helical transmembrane segment spans residues 1198–1215 (FETFIIFMILLSSGALAF). Topologically, residues 1216–1228 (EDIYIEQRKTIRT) are extracellular. A helical transmembrane segment spans residues 1229 to 1247 (ILEYADKVFTYIFILEMLL). At 1248–1261 (KWTAYGFVKFFTNA) the chain is on the cytoplasmic side. The helical transmembrane segment at 1262 to 1280 (WCWLDFLIVAVSLVSLIAN) threads the bilayer. At 1281–1288 (ALGYSELG) the chain is on the extracellular side. A helical transmembrane segment spans residues 1289 to 1307 (AIKSLRTLRALRPLRALSR). The Cytoplasmic portion of the chain corresponds to 1308–1324 (FEGMRVVVNALVGAIPS). The helical transmembrane segment at 1325–1344 (IMNVLLVCLIFWLIFSIMGV) threads the bilayer. At 1345–1397 (NLFAGKYHYCFNETSEIRFEIDEVNNKTDCEKLMEGNNTEIRWKNVKINFDNV) the chain is on the extracellular side. Cysteines 1354 and 1374 form a disulfide. 3 N-linked (GlcNAc...) asparagine glycosylation sites follow: Asn1356, Asn1370, and Asn1381. An intramembrane region (pore-forming) is located at residues 1398–1419 (GAGYLALLQVATFKGWMDIMYA). The Extracellular portion of the chain corresponds to 1420–1436 (AVDSRKPDEQPDYEGNI). A helical transmembrane segment spans residues 1437–1458 (YMYIYFVIFIIFGSFFTLNLFI). At 1459-1521 (GVIIDNFNQQ…IVFDFVTQQA (63 aa)) the chain is on the cytoplasmic side. At Ser1495 the chain carries Phosphoserine; by PKC. One copy of the IV repeat lies at 1502–1799 (IPRPLNKIQG…WEKFDPDATQ (298 aa)). A helical membrane pass occupies residues 1522–1539 (FDIVIMMLICLNMVTMMV). Topologically, residues 1540 to 1550 (ETDTQSKQMEN) are extracellular. A helical transmembrane segment spans residues 1551 to 1569 (ILYWINLVFVIFFTCECVL). The Cytoplasmic portion of the chain corresponds to 1570–1581 (KMFALRHYYFTI). A helical transmembrane segment spans residues 1582–1599 (GWNIFDFVVVILSIVGMF). At 1600–1612 (LADIIEKYFVSPT) the chain is on the extracellular side. A helical transmembrane segment spans residues 1613 to 1629 (LFRVIRLARIGRILRLI). At 1630–1648 (KGAKGIRTLLFALMMSLPA) the chain is on the cytoplasmic side. Residues 1649 to 1666 (LFNIGLLLFLVMFIFSIF) form a helical membrane-spanning segment. At 1667-1688 (GMSNFAYVKHEAGIDDMFNFET) the chain is on the extracellular side. An intramembrane region (pore-forming) is located at residues 1689–1711 (FGNSMICLFQITTSAGWDGLLLP). The Extracellular portion of the chain corresponds to 1712-1740 (ILNRPPDCSLDKEHPGSGFKGDCGNPSVG). Cys1719 and Cys1734 form a disulfide bridge. The chain crosses the membrane as a helical span at residues 1741–1763 (IFFFVSYIIISFLIVVNMYIAII). Residues 1764–1978 (LENFSVATEE…RQKEVRESKC (215 aa)) lie on the Cytoplasmic side of the membrane. The IQ domain maps to 1893-1922 (EEVSAVVLQRAYRGHLARRGFICRKITSNK). The interval 1924 to 1978 (ENGGTHREKKESTPSTASLPSYDSVTKPDKEKQQRAEEGRRERAKRQKEVRESKC) is disordered. Positions 1936–1947 (TPSTASLPSYDS) are enriched in polar residues. Over residues 1949-1978 (TKPDKEKQQRAEEGRRERAKRQKEVRESKC) the composition is skewed to basic and acidic residues.

This sequence belongs to the sodium channel (TC 1.A.1.10) family. Nav1.6/SCN8A subfamily. As to quaternary structure, the voltage-sensitive sodium channel consists of an ion-conducting pore-forming alpha subunit regulated by one or more beta-1 (SCN1B), beta-2 (SCN2B), beta-3 (SCN3B) and/or beta-4 (SCN4B) subunits. Beta-1 (SCN1B) and beta-3 (SCN3B) are non-covalently associated with alpha, while beta-2 (SCN2B) and beta-4 (SCN4B) are covalently linked by disulfide bonds. Interacts with FGF13. Interacts with NEDD4 and NEDD4L. Interacts with FGF14, GBG3, GBB2 and SCN1B. Interacts with TMEM233. Interacts with the conotoxin GVIIJ. Interacts with the scorpion toxin BMK M1. Interacts with CALM1; the interaction modulates the inactivation rate of SCN8A. May be ubiquitinated by NEDD4L; which would promote its endocytosis. Post-translationally, phosphorylation at Ser-1495 by PKC in a highly conserved cytoplasmic loop slows inactivation of the sodium channel and reduces peak sodium currents. As to expression, expressed in the hippocampus (at protein level). Expressed in brain, cerebellum and spinal cord. In terms of tissue distribution, expressed in non-neuronal tissues, such as monocytes/macrophages.

It is found in the cell membrane. Its subcellular location is the cell projection. It localises to the axon. The protein resides in the cytoplasmic vesicle. The protein localises to the podosome. It catalyses the reaction Na(+)(in) = Na(+)(out). Functionally, pore-forming subunit of a voltage-gated sodium channel complex assuming opened or closed conformations in response to the voltage difference across membranes and through which sodium ions selectively pass along their electrochemical gradient. Contributes to neuronal excitability by regulating action potential threshold and propagation. In terms of biological role, more specifically expressed in non-neuronal cells, could play a role in sodium release from intracellular compartments and participate in the control of podosomes formation and macrophages adhesion and movement. This chain is Sodium channel protein type 8 subunit alpha, found in Mus musculus (Mouse).